Here is a 131-residue protein sequence, read N- to C-terminus: Holo-[acyl-carrier-protein] synthase (131 aa).

Mg(2+)-binding residues include D8 and E59.

The protein belongs to the P-Pant transferase superfamily. AcpS family. Requires Mg(2+) as cofactor.

Its subcellular location is the cytoplasm. It catalyses the reaction apo-[ACP] + CoA = holo-[ACP] + adenosine 3',5'-bisphosphate + H(+). Functionally, transfers the 4'-phosphopantetheine moiety from coenzyme A to a Ser of acyl-carrier-protein. The polypeptide is Holo-[acyl-carrier-protein] synthase (Rickettsia conorii (strain ATCC VR-613 / Malish 7)).